The primary structure comprises 244 residues: 7-cyano-7-deazaguanine synthase (244 aa).

17–27 (FSGGQDSTTCL) serves as a coordination point for ATP. C205, C220, C223, and C226 together coordinate Zn(2+).

It belongs to the QueC family. It depends on Zn(2+) as a cofactor.

The enzyme catalyses 7-carboxy-7-deazaguanine + NH4(+) + ATP = 7-cyano-7-deazaguanine + ADP + phosphate + H2O + H(+). It functions in the pathway purine metabolism; 7-cyano-7-deazaguanine biosynthesis. Functionally, catalyzes the ATP-dependent conversion of 7-carboxy-7-deazaguanine (CDG) to 7-cyano-7-deazaguanine (preQ(0)). In Bordetella parapertussis (strain 12822 / ATCC BAA-587 / NCTC 13253), this protein is 7-cyano-7-deazaguanine synthase.